Consider the following 196-residue polypeptide: ATP-dependent Clp protease proteolytic subunit (196 aa).

The Nucleophile role is filled by Ser101. The active site involves His126.

It belongs to the peptidase S14 family. Component of the chloroplastic Clp protease core complex.

It is found in the plastid. The protein resides in the chloroplast stroma. It catalyses the reaction Hydrolysis of proteins to small peptides in the presence of ATP and magnesium. alpha-casein is the usual test substrate. In the absence of ATP, only oligopeptides shorter than five residues are hydrolyzed (such as succinyl-Leu-Tyr-|-NHMec, and Leu-Tyr-Leu-|-Tyr-Trp, in which cleavage of the -Tyr-|-Leu- and -Tyr-|-Trp bonds also occurs).. Cleaves peptides in various proteins in a process that requires ATP hydrolysis. Has a chymotrypsin-like activity. Plays a major role in the degradation of misfolded proteins. The chain is ATP-dependent Clp protease proteolytic subunit from Populus trichocarpa (Western balsam poplar).